A 181-amino-acid polypeptide reads, in one-letter code: NQKCSGNPRRYNGKSCASTTNYHDSHKGACGCGPASGDAQFGWNAGSFVAAASQMYFDSGNKGWCGQHCGQCIKLTTTGGYVPGQGGPVREGLSKTFMITNLCPNIYPNQDWCNQGSQYGGHNKYGYELHLDLENGRSQVTGMGWNNPETTWEVVNCDSEHNHDHRTPSNSMYGQCQCAHQ.

A disulfide bridge links cysteine 4 with cysteine 16. The active-site Nucleophile is the aspartate 24. Disulfide bonds link cysteine 30/cysteine 69, cysteine 32/cysteine 176, cysteine 65/cysteine 178, cysteine 72/cysteine 157, and cysteine 103/cysteine 113. Aspartate 132 serves as the catalytic Proton donor.

In terms of tissue distribution, digestive gland.

The catalysed reaction is Endohydrolysis of (1-&gt;4)-beta-D-glucosidic linkages in cellulose, lichenin and cereal beta-D-glucans.. In terms of biological role, active towards the soluble carboxymethylcellulose (CMC). Possesses expansin activity too. In Mytilus edulis (Blue mussel), this protein is Endoglucanase.